We begin with the raw amino-acid sequence, 399 residues long: N-acetylglucosamine-6-phosphate deacetylase (399 aa).

Residues H65, H67, and E135 each contribute to the a divalent metal cation site. 146 to 147 (AH) contributes to the substrate binding site. A divalent metal cation contacts are provided by H201 and H222. Substrate-binding positions include 225–226 (NG), R233, and 254–257 (DGHH). D279 contacts a divalent metal cation. D279 acts as the Proton donor/acceptor in catalysis. 312–314 (LAG) lines the substrate pocket.

This sequence belongs to the metallo-dependent hydrolases superfamily. NagA family. Homodimer. A divalent metal cation serves as cofactor.

The catalysed reaction is N-acetyl-D-glucosamine 6-phosphate + H2O = D-glucosamine 6-phosphate + acetate. Its pathway is amino-sugar metabolism; N-acetylneuraminate degradation; D-fructose 6-phosphate from N-acetylneuraminate: step 4/5. Functionally, involved in the first committed step in the biosynthesis of amino-sugar-nucleotides. Catalyzes the hydrolysis of the N-acetyl group of N-acetylglucosamine-6-phosphate (GlcNAc-6-P) to yield glucosamine 6-phosphate and acetate. This Vibrio furnissii protein is N-acetylglucosamine-6-phosphate deacetylase (manD).